The sequence spans 506 residues: 2,3-bisphosphoglycerate-independent phosphoglycerate mutase (506 aa).

2 residues coordinate Mn(2+): Asp-13 and Ser-63. Ser-63 serves as the catalytic Phosphoserine intermediate. Substrate contacts are provided by residues His-124, 153–154 (RD), Arg-183, Arg-189, 254–257 (RADR), and Lys-330. Residues Asp-396, His-400, Asp-437, His-438, and His-456 each coordinate Mn(2+).

This sequence belongs to the BPG-independent phosphoglycerate mutase family. As to quaternary structure, monomer. Requires Mn(2+) as cofactor.

It catalyses the reaction (2R)-2-phosphoglycerate = (2R)-3-phosphoglycerate. The protein operates within carbohydrate degradation; glycolysis; pyruvate from D-glyceraldehyde 3-phosphate: step 3/5. Its function is as follows. Catalyzes the interconversion of 2-phosphoglycerate and 3-phosphoglycerate. The protein is 2,3-bisphosphoglycerate-independent phosphoglycerate mutase of Cereibacter sphaeroides (strain ATCC 17025 / ATH 2.4.3) (Rhodobacter sphaeroides).